Here is a 258-residue protein sequence, read N- to C-terminus: MRRLINHIVNHDLFRWSVMTAMIFYRYSETCMEVTVRVGDPVTLGSGHGYHPGQKVHWYNQSCVGISNGENTHPICTYDPPKPGRRKTMKTTPLPSPLLYECHNSTLSILHVNVSDPKNYCRRKCPPNGNCEFPTCFTLSLISRTTTTRKPGQKTTLSRLKTTPNKHTQHKRSTRRTSPRDYNVTGLPKGFADSFTGNVEAHRAKDAAHSAWILIVIIIIIVVILFFFKIPQRLREKWDTRGYLYKGTDGLPTTDYLS.

Asn-60, Asn-104, and Asn-113 each carry an N-linked (GlcNAc...) asparagine; by host glycan. Positions 147–156 are enriched in low complexity; the sequence is TTRKPGQKTT. Residues 147–183 form a disordered region; the sequence is TTRKPGQKTTLSRLKTTPNKHTQHKRSTRRTSPRDYN. A compositionally biased stretch (polar residues) spans 157 to 166; sequence LSRLKTTPNK. A compositionally biased stretch (basic residues) spans 167-177; that stretch reads HTQHKRSTRRT. Asn-183 carries N-linked (GlcNAc...) asparagine; by host glycosylation. Residues 208–228 form a helical membrane-spanning segment; that stretch reads AHSAWILIVIIIIIVVILFFF.

The protein belongs to the RL11 family.

It localises to the membrane. This is an uncharacterized protein from Human cytomegalovirus (strain AD169) (HHV-5).